A 146-amino-acid polypeptide reads, in one-letter code: UPF0735 ACT domain-containing protein TTE2621 (146 aa).

The ACT domain occupies 71–146 (TFSMVLEHMP…GVRKIEVLGE (76 aa)).

The protein belongs to the UPF0735 family.

The protein is UPF0735 ACT domain-containing protein TTE2621 of Caldanaerobacter subterraneus subsp. tengcongensis (strain DSM 15242 / JCM 11007 / NBRC 100824 / MB4) (Thermoanaerobacter tengcongensis).